The chain runs to 464 residues: 3-deoxy-D-manno-octulosonic acid transferase (464 aa).

A helical; Signal-anchor transmembrane segment spans residues 2-22 (MLLYYALSFILLPVYFIIILI). An RPE1 insert domain is found at 47–93 (DSLDFMQTSANKEEFKGDTSLRTTTYTLIREDEGLGSTYKLPLEASD). The Proton acceptor role is filled by Glu-107. CMP-binding positions include 311-312 (PR), 352-354 (FGE), and 377-380 (NILE).

The protein belongs to the glycosyltransferase group 1 family. Glycosyltransferase 30 subfamily.

Its subcellular location is the cell inner membrane. It catalyses the reaction lipid IVA (E. coli) + CMP-3-deoxy-beta-D-manno-octulosonate = alpha-Kdo-(2-&gt;6)-lipid IVA (E. coli) + CMP + H(+). The protein operates within bacterial outer membrane biogenesis; LPS core biosynthesis. Functionally, involved in lipopolysaccharide (LPS) biosynthesis. Catalyzes the transfer of 3-deoxy-D-manno-octulosonate (Kdo) residue(s) from CMP-Kdo to lipid IV(A), the tetraacyldisaccharide-1,4'-bisphosphate precursor of lipid A. This chain is 3-deoxy-D-manno-octulosonic acid transferase (waaA), found in Rickettsia conorii (strain ATCC VR-613 / Malish 7).